Reading from the N-terminus, the 102-residue chain is Small ribosomal subunit protein uS10 (102 aa).

Belongs to the universal ribosomal protein uS10 family. Part of the 30S ribosomal subunit.

In terms of biological role, involved in the binding of tRNA to the ribosomes. This Staphylococcus haemolyticus (strain JCSC1435) protein is Small ribosomal subunit protein uS10.